A 3421-amino-acid polypeptide reads, in one-letter code: Hemocyanin 2 (3421 aa).

Positions 1 to 19 are cleaved as a signal peptide; it reads MWTILALLTATLLFEGAFS. Residues 20 to 442 form a functional unit a (wall) region; that stretch reads VDTVVRKNVD…KPPVPVAQAN (423 aa). Histidine 62 is a Cu cation binding site. The cysteines at positions 68 and 78 are disulfide-linked. Residues 79-81 constitute a cross-link (2'-(S-cysteinyl)-histidine (Cys-His)); that stretch reads CLH. Cu cation-binding residues include histidine 81, histidine 90, histidine 200, histidine 204, and histidine 231. Intrachain disulfides connect cysteine 190/cysteine 257 and cysteine 344/cysteine 356. The N-linked (GlcNAc...) asparagine glycan is linked to asparagine 408. A functional unit b (wall) region spans residues 443–853; that stretch reads LAVRKNINDL…RADAKDFGHS (411 aa). Histidine 483 is a Cu cation binding site. An intrachain disulfide couples cysteine 489 to cysteine 500. The 2'-(S-cysteinyl)-histidine (Cys-His) cross-link spans 501–503; the sequence is CVH. Histidine 503, histidine 512, histidine 622, histidine 626, histidine 653, and histidine 894 together coordinate Cu cation. Residues cysteine 612 and cysteine 678 are joined by a disulfide bond. The stretch at 632 to 673 is one WD 1 repeat; the sequence is SEKYSMSSLHYTAFDPIFYLHHSNVDRLWAIWQALQIRRGKS. Residues 854–1275 form a functional unit c (wall) region; it reads RKIRKAVDSL…DEYREAVTSA (422 aa). A disulfide bond links cysteine 900 and cysteine 911. The segment at residues 912–914 is a cross-link (2'-(S-cysteinyl)-histidine (Cys-His)); the sequence is CVH. Positions 914, 923, 1033, 1037, and 1063 each coordinate Cu cation. Intrachain disulfides connect cysteine 1023–cysteine 1090 and cysteine 1180–cysteine 1187. A WD 2 repeat occupies 1043–1084; the sequence is NEPYSMSSLRYTTYDPIFFLHRSNTDRLWAIWQALQKYRGKP. Asparagine 1183 carries N-linked (GlcNAc...) asparagine glycosylation. The interval 1276–1685 is functional unit d (wall); that stretch reads SHIRKNIRDL…NIYYDGLSQH (410 aa). Cu cation is bound at residue histidine 1313. Cysteine 1319 and cysteine 1328 are oxidised to a cystine. The 2'-(S-cysteinyl)-histidine (Cys-His) cross-link spans 1329–1331; it reads CVH. Positions 1331 and 1340 each coordinate Cu cation. A WD 3 repeat occupies 1387–1425; it reads QTFDPNPFFRGHIAFENAVTSRDPQPELWDNKDFYENVM. Intrachain disulfides connect cysteine 1434-cysteine 1501 and cysteine 1590-cysteine 1599. The Cu cation site is built by histidine 1444, histidine 1448, and histidine 1475. Residues 1454 to 1495 form a WD 4 repeat; the sequence is RAKYSLSSLDYTAFDPVFFLHHANVDRIWAIWQDLQRYRKKP. A glycan (N-linked (GlcNAc...) asparagine) is linked at asparagine 1653. The tract at residues 1686–2102 is functional unit e (wall); it reads NLVRKEVSSL…HGINVRHVGR (417 aa). Histidine 1726 contacts Cu cation. Residues cysteine 1732 and cysteine 1743 are joined by a disulfide bond. The segment at residues 1744 to 1746 is a cross-link (2'-(S-cysteinyl)-histidine (Cys-His)); the sequence is CLH. Residues histidine 1746, histidine 1755, histidine 1868, histidine 1872, and histidine 1899 each contribute to the Cu cation site. 2 disulfide bridges follow: cysteine 1858/cysteine 1925 and cysteine 2014/cysteine 2020. One copy of the WD 5 repeat lies at 1878 to 1919; it reads SKTHSIGHLHYASYDPLFYIHHSQTDRIWAIWQALQEHRGLS. Residues 2103 to 2522 form a functional unit f (wall) region; the sequence is NRIRMELSEL…DDHGSDHIAG (420 aa). Histidine 2143 serves as a coordination point for Cu cation. Cysteine 2149 and cysteine 2159 are joined by a disulfide. Positions 2160–2162 form a cross-link, 2'-(S-cysteinyl)-histidine (Cys-His); it reads CIH. Positions 2162, 2171, 2281, 2285, and 2312 each coordinate Cu cation. The WD 6 repeat unit spans residues 2168–2204; it reads PHWHRLYTLQMDMALLSHGSAVAIPYWDWTKPISKLP. 2 disulfide bridges follow: cysteine 2271-cysteine 2338 and cysteine 2425-cysteine 2431. Positions 2523 to 2929 are functional unit g (internal arc); that stretch reads SGVRKDVTSL…SGHDHSERHD (407 aa). Histidine 2563 lines the Cu cation pocket. A disulfide bridge links cysteine 2569 with cysteine 2579. The segment at residues 2580 to 2582 is a cross-link (2'-(S-cysteinyl)-histidine (Cys-His)); that stretch reads CTH. 5 residues coordinate Cu cation: histidine 2582, histidine 2591, histidine 2691, histidine 2695, and histidine 2722. 2 cysteine pairs are disulfide-bonded: cysteine 2681-cysteine 2748 and cysteine 2835-cysteine 2841. The stretch at 2700 to 2742 is one WD 7 repeat; sequence GHTPYGMSSLEYTAYDPLFYLHHSNTDRIWAIWQALQKYRGFQ. The segment at 2898–2927 is disordered; that stretch reads PSDRIKSPTIEHHGGDHHGGDTSGHDHSER. The segment at 2930–3421 is functional unit h (internal slab); sequence GFFRKEVGSL…VRIHIHIEDE (492 aa). Histidine 2970 provides a ligand contact to Cu cation. Cysteine 2976 and cysteine 2986 form a disulfide bridge. A cross-link (2'-(S-cysteinyl)-histidine (Cys-His)) is located at residues 2987–2989; the sequence is CVH. Histidine 2989, histidine 2998, histidine 3099, histidine 3103, and histidine 3130 together coordinate Cu cation. Cystine bridges form between cysteine 3089–cysteine 3156 and cysteine 3374–cysteine 3407. Residues 3109-3150 form a WD 8 repeat; the sequence is TETYSMSSLAFSAYDPVFMILHSGLDRLWIIWQELQKLRKKP.

The protein belongs to the tyrosinase family. Hemocyanin subfamily. As to quaternary structure, homo-didecamer and homo-multidecamer. Post-translationally, probably N-glycosylated. Asn-2489 is buried deeply in the protein which make it inaccessible for sugar attachment. In terms of tissue distribution, hemolymph.

It localises to the secreted. The protein localises to the extracellular space. In terms of biological role, hemocyanins are copper-containing oxygen carriers occurring freely dissolved in the hemolymph of many mollusks and arthropods. This chain is Hemocyanin 2, found in Megathura crenulata (Giant keyhole limpet).